Here is a 625-residue protein sequence, read N- to C-terminus: 1-deoxy-D-xylulose-5-phosphate synthase 1 (625 aa).

Thiamine diphosphate contacts are provided by residues His74 and 115 to 117; that span reads GHT. Residue Asp146 participates in Mg(2+) binding. Thiamine diphosphate is bound by residues 147–148, Asn175, Tyr286, and Glu368; that span reads GS. Asn175 contacts Mg(2+).

Belongs to the transketolase family. DXPS subfamily. As to quaternary structure, homodimer. Mg(2+) is required as a cofactor. It depends on thiamine diphosphate as a cofactor.

It catalyses the reaction D-glyceraldehyde 3-phosphate + pyruvate + H(+) = 1-deoxy-D-xylulose 5-phosphate + CO2. It participates in metabolic intermediate biosynthesis; 1-deoxy-D-xylulose 5-phosphate biosynthesis; 1-deoxy-D-xylulose 5-phosphate from D-glyceraldehyde 3-phosphate and pyruvate: step 1/1. Functionally, catalyzes the acyloin condensation reaction between C atoms 2 and 3 of pyruvate and glyceraldehyde 3-phosphate to yield 1-deoxy-D-xylulose-5-phosphate (DXP). The chain is 1-deoxy-D-xylulose-5-phosphate synthase 1 from Geobacter metallireducens (strain ATCC 53774 / DSM 7210 / GS-15).